The sequence spans 361 residues: PTI1-like tyrosine-protein kinase 1 (361 aa).

The disordered stretch occupies residues 16 to 43 (EEQQLKSSQQQSDANHKNSKPAPVAKHE). Residues 68-350 (FGSKALIGEG…IVVKALQPLL (283 aa)) form the Protein kinase domain. Residues 74-82 (IGEGSYGRV) and K96 contribute to the ATP site. The Proton acceptor role is filled by D200.

It belongs to the protein kinase superfamily. Tyr protein kinase family. As to quaternary structure, interacts with OXI1. Post-translationally, autophosphorylated and phosphorylated by OXI1.

Its subcellular location is the cell membrane. The catalysed reaction is L-tyrosyl-[protein] + ATP = O-phospho-L-tyrosyl-[protein] + ADP + H(+). The protein is PTI1-like tyrosine-protein kinase 1 (PTI11) of Arabidopsis thaliana (Mouse-ear cress).